Here is a 559-residue protein sequence, read N- to C-terminus: Suppressor of tumorigenicity 7 protein-like (559 aa).

The next 3 helical transmembrane spans lie at 39–59, 83–103, and 513–533; these read GLANSGSTLWFLAGLGLLYAL, FYVALTGTSSLISGLIFIFEW, and LPFFIHFTAGLCSSTAMLAFL.

Belongs to the ST7 family. In terms of tissue distribution, ubiquitously expressed.

It is found in the membrane. The chain is Suppressor of tumorigenicity 7 protein-like (St7l) from Mus musculus (Mouse).